A 97-amino-acid chain; its full sequence is Co-chaperonin GroES (97 aa).

The protein belongs to the GroES chaperonin family. In terms of assembly, heptamer of 7 subunits arranged in a ring. Interacts with the chaperonin GroEL.

The protein localises to the cytoplasm. Its function is as follows. Together with the chaperonin GroEL, plays an essential role in assisting protein folding. The GroEL-GroES system forms a nano-cage that allows encapsulation of the non-native substrate proteins and provides a physical environment optimized to promote and accelerate protein folding. GroES binds to the apical surface of the GroEL ring, thereby capping the opening of the GroEL channel. This chain is Co-chaperonin GroES, found in Wigglesworthia glossinidia brevipalpis.